We begin with the raw amino-acid sequence, 503 residues long: Aspartyl/glutamyl-tRNA(Asn/Gln) amidotransferase subunit B (503 aa).

The protein belongs to the GatB/GatE family. GatB subfamily. As to quaternary structure, heterotrimer of A, B and C subunits.

It carries out the reaction L-glutamyl-tRNA(Gln) + L-glutamine + ATP + H2O = L-glutaminyl-tRNA(Gln) + L-glutamate + ADP + phosphate + H(+). It catalyses the reaction L-aspartyl-tRNA(Asn) + L-glutamine + ATP + H2O = L-asparaginyl-tRNA(Asn) + L-glutamate + ADP + phosphate + 2 H(+). Functionally, allows the formation of correctly charged Asn-tRNA(Asn) or Gln-tRNA(Gln) through the transamidation of misacylated Asp-tRNA(Asn) or Glu-tRNA(Gln) in organisms which lack either or both of asparaginyl-tRNA or glutaminyl-tRNA synthetases. The reaction takes place in the presence of glutamine and ATP through an activated phospho-Asp-tRNA(Asn) or phospho-Glu-tRNA(Gln). The protein is Aspartyl/glutamyl-tRNA(Asn/Gln) amidotransferase subunit B of Ruegeria pomeroyi (strain ATCC 700808 / DSM 15171 / DSS-3) (Silicibacter pomeroyi).